Consider the following 491-residue polypeptide: MNTQYNSSYIFSITLVATLGGLLFGYDTAVISGTVESLNTVFVAPQNLSESAANSLLGFCVASALIGCIIGGALGGYCSNRFGRRDSLKIAAVLFFISGVGSAWPELGFTSINPDNTVPVYLAGYVPEFVIYRIIGGIGVGLASMLSPMYIAELAPAHIRGKLVSFNQFAIIFGQLLVYCVNYFIARSGDASWLNTDGWRYMFASECIPALLFLMLLYTVPESPRWLMSRGKQEQAEGILRKIMGNTLATQAVQEIKHSLDHGRKTGGRLLMFGVGVIVIGVMLSIFQQFVGINVVLYYAPEVFKTLGASTDIALLQTIIVGVINLTFTVLAIMTVDKFGRKPLQIIGALGMAIGMFSLGTAFYTQAPGIVALLSMLFYVAAFAMSWGPVCWVLLSEIFPNAIRGKALAIAVAAQWLANYFVSWTFPMMDKNSWLVAHFHNGFSYWIYGCMGVLAALFMWKFVPETKGKTLEELEALWEPETKKTQQTATL.

At 1–9 (MNTQYNSSY) the chain is on the cytoplasmic side. A helical transmembrane segment spans residues 10-30 (IFSITLVATLGGLLFGYDTAV). Residues 31–55 (ISGTVESLNTVFVAPQNLSESAANS) lie on the Periplasmic side of the membrane. A helical transmembrane segment spans residues 56-76 (LLGFCVASALIGCIIGGALGG). Topologically, residues 77–89 (YCSNRFGRRDSLK) are cytoplasmic. A helical transmembrane segment spans residues 90–110 (IAAVLFFISGVGSAWPELGFT). Residues 111 to 133 (SINPDNTVPVYLAGYVPEFVIYR) are Periplasmic-facing. The chain crosses the membrane as a helical span at residues 134 to 154 (IIGGIGVGLASMLSPMYIAEL). At 155 to 165 (APAHIRGKLVS) the chain is on the cytoplasmic side. The chain crosses the membrane as a helical span at residues 166–186 (FNQFAIIFGQLLVYCVNYFIA). Residue Q168 participates in beta-D-xylose binding. The Periplasmic segment spans residues 187 to 200 (RSGDASWLNTDGWR). The helical transmembrane segment at 201-221 (YMFASECIPALLFLMLLYTVP) threads the bilayer. The Cytoplasmic portion of the chain corresponds to 222–272 (ESPRWLMSRGKQEQAEGILRKIMGNTLATQAVQEIKHSLDHGRKTGGRLLM). A helical membrane pass occupies residues 273 to 293 (FGVGVIVIGVMLSIFQQFVGI). Residues 288–289 (QQ) and N294 contribute to the beta-D-xylose site. Over 294–312 (NVVLYYAPEVFKTLGASTD) the chain is Periplasmic. A helical membrane pass occupies residues 313 to 333 (IALLQTIIVGVINLTFTVLAI). The Cytoplasmic portion of the chain corresponds to 334–343 (MTVDKFGRKP). Residues 344–364 (LQIIGALGMAIGMFSLGTAFY) form a helical membrane-spanning segment. At 365 to 369 (TQAPG) the chain is on the periplasmic side. The chain crosses the membrane as a helical span at residues 370-390 (IVALLSMLFYVAAFAMSWGPV). Over 391 to 407 (CWVLLSEIFPNAIRGKA) the chain is Cytoplasmic. Residues W392 and Q415 each coordinate beta-D-xylose. A helical membrane pass occupies residues 408 to 428 (LAIAVAAQWLANYFVSWTFPM). Residues 429 to 442 (MDKNSWLVAHFHNG) are Periplasmic-facing. Residues 443–463 (FSYWIYGCMGVLAALFMWKFV) traverse the membrane as a helical segment. The Cytoplasmic portion of the chain corresponds to 464-491 (PETKGKTLEELEALWEPETKKTQQTATL).

Belongs to the major facilitator superfamily. Sugar transporter (TC 2.A.1.1) family.

The protein localises to the cell inner membrane. The catalysed reaction is D-xylose(in) + H(+)(in) = D-xylose(out) + H(+)(out). In terms of biological role, uptake of D-xylose across the boundary membrane with the concomitant transport of protons into the cell (symport system). The polypeptide is D-xylose-proton symporter (xylE) (Escherichia coli O157:H7).